Reading from the N-terminus, the 613-residue chain is Dihydroxy-acid dehydratase (613 aa).

Aspartate 81 lines the Mg(2+) pocket. Cysteine 122 serves as a coordination point for [2Fe-2S] cluster. Mg(2+) contacts are provided by aspartate 123 and lysine 124. At lysine 124 the chain carries N6-carboxylysine. Cysteine 195 lines the [2Fe-2S] cluster pocket. Glutamate 491 provides a ligand contact to Mg(2+). The Proton acceptor role is filled by serine 517.

This sequence belongs to the IlvD/Edd family. Homodimer. It depends on [2Fe-2S] cluster as a cofactor. Requires Mg(2+) as cofactor.

It catalyses the reaction (2R)-2,3-dihydroxy-3-methylbutanoate = 3-methyl-2-oxobutanoate + H2O. The enzyme catalyses (2R,3R)-2,3-dihydroxy-3-methylpentanoate = (S)-3-methyl-2-oxopentanoate + H2O. It functions in the pathway amino-acid biosynthesis; L-isoleucine biosynthesis; L-isoleucine from 2-oxobutanoate: step 3/4. It participates in amino-acid biosynthesis; L-valine biosynthesis; L-valine from pyruvate: step 3/4. Functionally, functions in the biosynthesis of branched-chain amino acids. Catalyzes the dehydration of (2R,3R)-2,3-dihydroxy-3-methylpentanoate (2,3-dihydroxy-3-methylvalerate) into 2-oxo-3-methylpentanoate (2-oxo-3-methylvalerate) and of (2R)-2,3-dihydroxy-3-methylbutanoate (2,3-dihydroxyisovalerate) into 2-oxo-3-methylbutanoate (2-oxoisovalerate), the penultimate precursor to L-isoleucine and L-valine, respectively. This is Dihydroxy-acid dehydratase from Nitrobacter hamburgensis (strain DSM 10229 / NCIMB 13809 / X14).